A 21-amino-acid polypeptide reads, in one-letter code: Glucose-1-phosphate adenylyltransferase large subunit (21 aa).

The disordered stretch occupies residues 1 to 21; the sequence is SVTADNASETKVREIGQEKSS. Residues 8-21 are compositionally biased toward basic and acidic residues; that stretch reads SETKVREIGQEKSS.

This sequence belongs to the bacterial/plant glucose-1-phosphate adenylyltransferase family. In terms of assembly, heterotetramer.

It is found in the plastid. Its subcellular location is the chloroplast. The protein resides in the amyloplast. It catalyses the reaction alpha-D-glucose 1-phosphate + ATP + H(+) = ADP-alpha-D-glucose + diphosphate. Its pathway is glycan biosynthesis; starch biosynthesis. With respect to regulation, activated by 3'phosphoglycerate, inhibited by orthophosphate. Allosteric regulation. In terms of biological role, this protein plays a role in synthesis of starch. It catalyzes the synthesis of the activated glycosyl donor, ADP-glucose from Glc-1-P and ATP. The polypeptide is Glucose-1-phosphate adenylyltransferase large subunit (Spinacia oleracea (Spinach)).